A 218-amino-acid chain; its full sequence is UPF0598 protein C8orf82 homolog (218 aa).

This sequence belongs to the UPF0598 family.

The sequence is that of UPF0598 protein C8orf82 homolog from Bos taurus (Bovine).